Consider the following 75-residue polypeptide: Beta-defensin 30 (75 aa).

Residues 1–22 (MGSLQLILVLFVLLSDVPPVRS) form the signal peptide. Cystine bridges form between Cys-35–Cys-62, Cys-42–Cys-56, and Cys-46–Cys-63.

It belongs to the beta-defensin family.

The protein localises to the secreted. Its function is as follows. Has antibacterial activity. This is Beta-defensin 30 (Defb30) from Rattus norvegicus (Rat).